The primary structure comprises 329 residues: Aspartate--ammonia ligase (329 aa).

Belongs to the class-II aminoacyl-tRNA synthetase family. AsnA subfamily.

The protein localises to the cytoplasm. The enzyme catalyses L-aspartate + NH4(+) + ATP = L-asparagine + AMP + diphosphate + H(+). It participates in amino-acid biosynthesis; L-asparagine biosynthesis; L-asparagine from L-aspartate (ammonia route): step 1/1. The sequence is that of Aspartate--ammonia ligase from Ureaplasma urealyticum serovar 10 (strain ATCC 33699 / Western).